The primary structure comprises 245 residues: PF03932 family protein CutC (245 aa).

It belongs to the CutC family.

It localises to the cytoplasm. The polypeptide is PF03932 family protein CutC (Photobacterium profundum (strain SS9)).